A 212-amino-acid polypeptide reads, in one-letter code: Leucine efflux protein (212 aa).

Helical transmembrane passes span 5 to 25, 49 to 69, 81 to 101, 122 to 142, 153 to 173, and 188 to 208; these read FGVL…LVPG, GVFI…ATLI, YLGA…VLTQ, TLSL…VQFI, FFIL…FLIL, and LAKL…ARLA.

It belongs to the Rht family.

The protein resides in the cell inner membrane. The enzyme catalyses L-leucine(in) + H(+)(out) = L-leucine(out) + H(+)(in). Exporter of leucine. This chain is Leucine efflux protein (leuE), found in Klebsiella pneumoniae subsp. pneumoniae (strain ATCC 700721 / MGH 78578).